A 151-amino-acid chain; its full sequence is Large ribosomal subunit protein bL17 (151 aa).

The protein belongs to the bacterial ribosomal protein bL17 family. In terms of assembly, part of the 50S ribosomal subunit. Contacts protein L32.

The polypeptide is Large ribosomal subunit protein bL17 (Chlorobium limicola (strain DSM 245 / NBRC 103803 / 6330)).